The following is a 245-amino-acid chain: 1-(5-phosphoribosyl)-5-[(5-phosphoribosylamino)methylideneamino] imidazole-4-carboxamide isomerase (245 aa).

The active-site Proton acceptor is the Asp-8. Asp-130 (proton donor) is an active-site residue.

This sequence belongs to the HisA/HisF family.

It is found in the cytoplasm. The enzyme catalyses 1-(5-phospho-beta-D-ribosyl)-5-[(5-phospho-beta-D-ribosylamino)methylideneamino]imidazole-4-carboxamide = 5-[(5-phospho-1-deoxy-D-ribulos-1-ylimino)methylamino]-1-(5-phospho-beta-D-ribosyl)imidazole-4-carboxamide. It participates in amino-acid biosynthesis; L-histidine biosynthesis; L-histidine from 5-phospho-alpha-D-ribose 1-diphosphate: step 4/9. In Pseudomonas fluorescens (strain ATCC BAA-477 / NRRL B-23932 / Pf-5), this protein is 1-(5-phosphoribosyl)-5-[(5-phosphoribosylamino)methylideneamino] imidazole-4-carboxamide isomerase.